A 566-amino-acid polypeptide reads, in one-letter code: Mediator of RNA polymerase II transcription subunit 1 (566 aa).

A Phosphoserine modification is found at Ser-155. Residues 361-425 (TPSSNSNSSE…TNKSKRPSIT (65 aa)) are disordered. Residues 410–421 (RRRRSSTNKSKR) show a composition bias toward basic residues. Position 423 is a phosphoserine (Ser-423).

It belongs to the Mediator complex subunit 1 family. In terms of assembly, component of the Mediator complex, which is composed of at least 21 subunits that form three structurally distinct submodules. The Mediator head module contains MED6, MED8, MED11, SRB4/MED17, SRB5/MED18, ROX3/MED19, SRB2/MED20 and SRB6/MED22, the middle module contains MED1, MED4, NUT1/MED5, MED7, CSE2/MED9, NUT2/MED10, SRB7/MED21 and SOH1/MED31, and the tail module contains MED2, PGD1/MED3, RGR1/MED14, GAL11/MED15 and SIN4/MED16. The head and the middle modules interact directly with RNA polymerase II, whereas the elongated tail module interacts with gene-specific regulatory proteins. MED1 interacts directly with MED4 and MED7.

Its subcellular location is the nucleus. Component of the Mediator complex, a coactivator involved in the regulated transcription of nearly all RNA polymerase II-dependent genes. Mediator functions as a bridge to convey information from gene-specific regulatory proteins to the basal RNA polymerase II transcription machinery. The Mediator complex, having a compact conformation in its free form, is recruited to promoters by direct interactions with regulatory proteins and serves for the assembly of a functional preinitiation complex with RNA polymerase II and the general transcription factors. The Mediator complex unfolds to an extended conformation and partially surrounds RNA polymerase II, specifically interacting with the unphosphorylated form of the C-terminal domain (CTD) of RNA polymerase II. The Mediator complex dissociates from the RNA polymerase II holoenzyme and stays at the promoter when transcriptional elongation begins. This Saccharomyces cerevisiae (strain ATCC 204508 / S288c) (Baker's yeast) protein is Mediator of RNA polymerase II transcription subunit 1 (MED1).